The primary structure comprises 61 residues: Protein SspF (61 aa).

This sequence belongs to the alpha/beta-type SASP family.

May play some important role in either sporulation or the dormant spore. The polypeptide is Protein SspF (sspF) (Bacillus subtilis (strain 168)).